The sequence spans 362 residues: Protein U8 (362 aa).

Belongs to the herpesviridae US22 family.

The protein is Protein U8 (U8) of Human herpesvirus 7 (strain JI) (HHV-7).